A 387-amino-acid chain; its full sequence is 1-hydroxy-2-naphthoate 1,2-dioxygenasee (387 aa).

Cupin type-2 domains lie at 103 to 171 (FQLV…VWLD) and 271 to 337 (VQRL…VLLF).

As to quaternary structure, homohexamer. Fe(2+) serves as cofactor.

The enzyme catalyses 1-hydroxy-2-naphthoate + O2 = (3Z)-4-(2-carboxyphenyl)-2-oxobut-3-enoate + H(+). In terms of biological role, dioxygenase involved in phenanthrene catabolism by mediating cleavage of 1-hydroxy-2-naphthoate. The polypeptide is 1-hydroxy-2-naphthoate 1,2-dioxygenasee (phdI) (Nocardioides sp. (strain KP7)).